Reading from the N-terminus, the 408-residue chain is Echinulin prenyltransferase 2 (408 aa).

Dimethylallyl diphosphate-binding residues include arginine 94, lysine 181, tyrosine 183, arginine 248, lysine 250, tyrosine 252, glutamine 334, tyrosine 336, tyrosine 400, and tyrosine 404.

This sequence belongs to the tryptophan dimethylallyltransferase family.

The enzyme catalyses preechinulin + dimethylallyl diphosphate = tardioxopiperazine B + diphosphate. It carries out the reaction preechinulin + dimethylallyl diphosphate = tardioxopiperazine A + diphosphate. The catalysed reaction is tardioxopiperazine A + dimethylallyl diphosphate = echinulin + diphosphate. It catalyses the reaction tardioxopiperazine A + dimethylallyl diphosphate = variecolorin L + diphosphate. The enzyme catalyses neoechinulin A + dimethylallyl diphosphate = variecolorin G + diphosphate. It carries out the reaction neoechinulin A + dimethylallyl diphosphate = isoechinulin A + diphosphate. The catalysed reaction is isoechinulin A + dimethylallyl diphosphate = dehydroechinulin + diphosphate. It catalyses the reaction neoechinulin B + dimethylallyl diphosphate = isoechinulin B + diphosphate. It functions in the pathway secondary metabolite biosynthesis. Its pathway is alkaloid biosynthesis. Its function is as follows. Prenyltransferase; part of the gene cluster that mediates the biosynthesis of echinulin family alkaloid. The pathway begins with the biosynthesis of the cyclic dipeptide cyclo-L-Trp-L-Ala (cyclo-TA) by the NRPS echPS via condensation of L-alanine and L-tryptophan. The prenyltransferase echPT1 then catalyzes the first prenylation step, a reverse prenylation reaction at C2, to yield preechinulin. Preechinulin is the substrate of the cytochrome P450 monooxygenase echP450 that catalyzes the formation of the double bond between C10 and C11 to produce neoechulin A. The unique prenyltransferase echPT2 functions as a competitive enzyme with echP450 for preechinulin metabolization and uses preechinulin for effective regiospecific prenylations. Preechinulin is prenylated by echPT2 at C5 or C7. C7-prenylation leads to accumulation of tardioxopiperazine B without further modification by echPT2. In contrast, the C5-prenylated tardioxopiperazine A can be prenylated again by echPT2, predominantly at C7 to form echinulin or less frequently at C4 to give variecolorin L. EchPT2 also accepts neoechilunin A to produce varlecolorin G (prenylation at C5) or isoechinulin A (prenylation at C7). EchPT2 further converts isoechinulin A into dehydroechinulin. Moreover, a yet unidentified enzyme can also convert neoechilunin A into neoechilunin B by introducing a double bond between positions C14 and C17 and thus provides a further substrate to echPT2 for C5 and C7 prenylation. The sequence is that of Echinulin prenyltransferase 2 from Aspergillus ruber (Eurotium rubrum).